The chain runs to 477 residues: Methylenetetrahydrofolate--tRNA-(uracil-5-)-methyltransferase TrmFO (477 aa).

Residue 14 to 19 coordinates FAD; the sequence is GGGLAG.

It belongs to the MnmG family. TrmFO subfamily. The cofactor is FAD.

It is found in the cytoplasm. It catalyses the reaction uridine(54) in tRNA + (6R)-5,10-methylene-5,6,7,8-tetrahydrofolate + NADH + H(+) = 5-methyluridine(54) in tRNA + (6S)-5,6,7,8-tetrahydrofolate + NAD(+). It carries out the reaction uridine(54) in tRNA + (6R)-5,10-methylene-5,6,7,8-tetrahydrofolate + NADPH + H(+) = 5-methyluridine(54) in tRNA + (6S)-5,6,7,8-tetrahydrofolate + NADP(+). Catalyzes the folate-dependent formation of 5-methyl-uridine at position 54 (M-5-U54) in all tRNAs. This is Methylenetetrahydrofolate--tRNA-(uracil-5-)-methyltransferase TrmFO from Rhizobium etli (strain ATCC 51251 / DSM 11541 / JCM 21823 / NBRC 15573 / CFN 42).